The primary structure comprises 607 residues: Glutamyl-tRNA(Gln) amidotransferase subunit E (607 aa).

The interval 399-428 (GVPEETRGANPDGTTRFLRPRPGAARMYPE) is disordered.

It belongs to the GatB/GatE family. GatE subfamily. As to quaternary structure, heterodimer of GatD and GatE.

The catalysed reaction is L-glutamyl-tRNA(Gln) + L-glutamine + ATP + H2O = L-glutaminyl-tRNA(Gln) + L-glutamate + ADP + phosphate + H(+). Allows the formation of correctly charged Gln-tRNA(Gln) through the transamidation of misacylated Glu-tRNA(Gln) in organisms which lack glutaminyl-tRNA synthetase. The reaction takes place in the presence of glutamine and ATP through an activated gamma-phospho-Glu-tRNA(Gln). The GatDE system is specific for glutamate and does not act on aspartate. The polypeptide is Glutamyl-tRNA(Gln) amidotransferase subunit E (Pyrobaculum neutrophilum (strain DSM 2338 / JCM 9278 / NBRC 100436 / V24Sta) (Thermoproteus neutrophilus)).